We begin with the raw amino-acid sequence, 494 residues long: E3 ubiquitin-protein ligase ari-1.1 (494 aa).

Acidic residues predominate over residues 1 to 30 (MSSDDEINMDDSDSSQGEIDDGCMSDDDGI). The tract at residues 1-52 (MSSDDEINMDDSDSSQGEIDDGCMSDDDGIVLESREQNSSDYKDNGEPDNEV) is disordered. Residues 33 to 52 (ESREQNSSDYKDNGEPDNEV) show a composition bias toward basic and acidic residues. Positions 124–331 (GDAECDICCS…SSWYSCNRFD (208 aa)) are TRIAD supradomain. Residues C128, C131, C142, H144, C147, C150, C169, C174, C214, C219, C235, C237, C242, C245, H250, C255, C282, and C285 each coordinate Zn(2+). The RING-type 1 zinc-finger motif lies at 128 to 174 (CDICCSLGELSGLSCNHRACTQCWKAYLTNKIANNAQSEIECMAPNC). The segment at 194-255 (ATYRKLIVAS…GHDWHEPVNC (62 aa)) adopts an IBR-type zinc-finger fold. Residues 282–313 (CPKCMITIEKDGGCNHMTCKNTACRFEFCWMC) form an RING-type 2; atypical zinc finger. C295 is a catalytic residue. 6 residues coordinate Zn(2+): C300, C305, C310, C313, H320, and C327. Residues 346-494 (RANLQRYLFY…ADQELWVFNE (149 aa)) form an ariadne domain region.

This sequence belongs to the RBR family. Ariadne subfamily. In terms of assembly, interacts with ubiquitin-conjugating enzyme E2 ubc-18.

It localises to the nucleus. The protein localises to the cytoplasm. The catalysed reaction is [E2 ubiquitin-conjugating enzyme]-S-ubiquitinyl-L-cysteine + [acceptor protein]-L-lysine = [E2 ubiquitin-conjugating enzyme]-L-cysteine + [acceptor protein]-N(6)-ubiquitinyl-L-lysine.. Its activity is regulated as follows. Autoinhibited by the ariadne domain, which masks the second RING-type zinc finger that contains the active site and inhibits the E3 activity. E3 ubiquitin-protein transferase, which catalyzes ubiquitination of target proteins together with ubiquitin-conjugating enzyme E2 ubc-18. Acts with ubc-18 to regulate pharyngeal development. In Caenorhabditis elegans, this protein is E3 ubiquitin-protein ligase ari-1.1.